Consider the following 275-residue polypeptide: Gap junction gamma-3 protein (275 aa).

Over 1-22 (MCGSFLRRVAAEESRHPTPVGR) the chain is Cytoplasmic. The chain crosses the membrane as a helical span at residues 23 to 43 (LLLPALLGLRLVLLAAGGTGV). At 44–77 (FGGGEEQSEFVCHTQQAGCKAVCYDAFHPLSPLR) the chain is on the extracellular side. Residues 78–98 (FWAFQVTLVAVPSALYMGFIL) traverse the membrane as a helical segment. Residues 99–134 (YHVIWHWEASEKVKTEEETLSQGEKGGEASRAGSSR) lie on the Cytoplasmic side of the membrane. The helical transmembrane segment at 135-155 (LLWAYVAQLGVRLALEGAALG) threads the bilayer. The Extracellular segment spans residues 156-196 (GQYHLYGFRMPSSFVCRLEPCLGSTNCYLSRPSEKSIFLKT). Residues 197–217 (MFGVTGLCLLFTLLELVLLGL) form a helical membrane-spanning segment. Over 218 to 275 (GRWWRIWRHKSPSSNYSPTSQSAKRCKAPTDNFPVVEIRERPGEAGERGSEVPLSARP) the chain is Cytoplasmic. Basic and acidic residues predominate over residues 254 to 267 (EIRERPGEAGERGS). The segment at 254-275 (EIRERPGEAGERGSEVPLSARP) is disordered.

Belongs to the connexin family. Gamma-type subfamily. In terms of assembly, a connexon is composed of a hexamer of connexins.

The protein localises to the cell membrane. It localises to the cell junction. The protein resides in the gap junction. One gap junction consists of a cluster of closely packed pairs of transmembrane channels, the connexons, through which materials of low MW diffuse from one cell to a neighboring cell. The sequence is that of Gap junction gamma-3 protein (GJC3) from Bos taurus (Bovine).